The sequence spans 265 residues: MAINIIVAGPRGRMGYEAVQMITKEDSFRLVACLDHKHDGLNLGELEQFSDDLQVPIYTDIDSCLKQHQADVFVDLTTPEVGYKHTKTALEYKVRPVVGTTGFTDEQLSELKELSKQQQRGCIIAPNFAIGAVLMMKFSKMAAKYFPNVEIIEKHHDQKLDAPSGTAKKTAELIQDVRESQKQGHPKEEETLPGARGADMDGMRIHSMRLPGLVAHQEVIFGGAGQTLTISHDSMNRASFMDGIRECVNQVMDLEELVYGLENLL.

9–14 serves as a coordination point for NAD(+); the sequence is GPRGRM. Lys-37 contributes to the NADP(+) binding site. Residues 99–101 and 125–128 each bind NAD(+); these read GTT and APNF. Residue His-155 is the Proton donor/acceptor of the active site. His-156 is a (S)-2,3,4,5-tetrahydrodipicolinate binding site. Lys-159 functions as the Proton donor in the catalytic mechanism. 165–166 contributes to the (S)-2,3,4,5-tetrahydrodipicolinate binding site; that stretch reads GT. Over residues 178–190 the composition is skewed to basic and acidic residues; the sequence is RESQKQGHPKEEE. The tract at residues 178–200 is disordered; that stretch reads RESQKQGHPKEEETLPGARGADM.

This sequence belongs to the DapB family.

It is found in the cytoplasm. The enzyme catalyses (S)-2,3,4,5-tetrahydrodipicolinate + NAD(+) + H2O = (2S,4S)-4-hydroxy-2,3,4,5-tetrahydrodipicolinate + NADH + H(+). It carries out the reaction (S)-2,3,4,5-tetrahydrodipicolinate + NADP(+) + H2O = (2S,4S)-4-hydroxy-2,3,4,5-tetrahydrodipicolinate + NADPH + H(+). Its pathway is amino-acid biosynthesis; L-lysine biosynthesis via DAP pathway; (S)-tetrahydrodipicolinate from L-aspartate: step 4/4. Its function is as follows. Catalyzes the conversion of 4-hydroxy-tetrahydrodipicolinate (HTPA) to tetrahydrodipicolinate. The sequence is that of 4-hydroxy-tetrahydrodipicolinate reductase from Oceanobacillus iheyensis (strain DSM 14371 / CIP 107618 / JCM 11309 / KCTC 3954 / HTE831).